Reading from the N-terminus, the 179-residue chain is Interleukin-22 (179 aa).

The N-terminal stretch at 1–33 is a signal peptide; it reads MAVLQKSMSFSLMGTLAASCLLLIALWAQEANA. Disulfide bonds link cysteine 40/cysteine 132 and cysteine 89/cysteine 178. Residues asparagine 54, asparagine 68, and asparagine 97 are each glycosylated (N-linked (GlcNAc...) asparagine).

It belongs to the IL-10 family.

Its subcellular location is the secreted. Cytokine that plays a critical role in modulating tissue responses during inflammation. Plays an essential role in the regeneration of epithelial cells to maintain barrier function after injury and for the prevention of further tissue damage. Unlike most of the cytokines, has no effect on immune cells. Signals through a heterodimeric receptor composed of two subunits, the specific receptor IL22RA1 which is present on non-immune cells in many organs and the shared subunit IL10RB. Ligation of IL22RA1 with IL22 induces activation of the tyrosine kinases JAK1 and TYK2, which in turn activates STAT3. In turn, promotes cell survival and proliferation through STAT3, ERK1/2 and PI3K/AKT pathways. Promotes phosphorylation of GSK3B at 'Ser-9' and CTTN. Promotes epithelial cell spreading. This Mus musculus (Mouse) protein is Interleukin-22 (Il22).